The primary structure comprises 179 residues: Beta-defensin 22 (179 aa).

A signal peptide spans 1 to 20; sequence MKSLLSTLVIIMFLAHLVTG. Intrachain disulfides connect Cys-27–Cys-58, Cys-34–Cys-52, and Cys-38–Cys-59. A compositionally biased stretch (low complexity) spans 105–150; the sequence is GTPTKTSAPAKTSAPAKTSTTTKASNAAKASTTTKASNAAKASAAT. Residues 105–152 are disordered; that stretch reads GTPTKTSAPAKTSAPAKTSTTTKASNAAKASTTTKASNAAKASAATMA.

It belongs to the beta-defensin family. In terms of processing, O-glycosylated; glycans contain alpha(2,3)-linked sialic acids. In terms of tissue distribution, specifically expressed in corpus epididymis and cauda epididymis with expression in corpus being highest (at protein level). Not detected in other tissues tested, including testis, prostate, seminal vesicle and vas deferens (at protein level).

The protein localises to the cytoplasmic vesicle. Its subcellular location is the secretory vesicle. It is found in the acrosome. The protein resides in the secreted. It localises to the extracellular space. Probable component of sperm glycocalyx. Likely protects and facilitates transport of sperm in the female reproductive tract. Probably released from the sperm surface during capacitation. The sequence is that of Beta-defensin 22 from Mus musculus (Mouse).